Here is a 378-residue protein sequence, read N- to C-terminus: Protein KlaB (378 aa).

It belongs to the TelA family.

Its function is as follows. Belongs to the kla operon, which is associated with cryptic tellurite resistance, and IncW plasmid fertility inhibition. The chain is Protein KlaB (klaB) from Escherichia coli.